The sequence spans 284 residues: Tropomyosin alpha-1 chain (284 aa).

The tract at residues 1–40 (MDAIKKKMQMLKLDKENALDRAEQAEADKKGAEDKSKQLE) is disordered. Positions 1–284 (MDAIKKKMQM…DHALNDMTSI (284 aa)) form a coiled coil. Residues 12–40 (KLDKENALDRAEQAEADKKGAEDKSKQLE) are compositionally biased toward basic and acidic residues.

Belongs to the tropomyosin family. As to quaternary structure, homodimer. Heterodimer of an alpha (TPM1, TPM3 or TPM4) and a beta (TPM2) chain.

The protein localises to the cytoplasm. Its subcellular location is the cytoskeleton. Its function is as follows. Binds to actin filaments in muscle and non-muscle cells. Plays a central role, in association with the troponin complex, in the calcium dependent regulation of vertebrate striated muscle contraction. Smooth muscle contraction is regulated by interaction with caldesmon. In non-muscle cells is implicated in stabilizing cytoskeleton actin filaments. This Rana temporaria (European common frog) protein is Tropomyosin alpha-1 chain (tpm1).